A 279-amino-acid polypeptide reads, in one-letter code: MNYNNECLSMLKLGKKTEYKSTYDPSLLQAVPRYLNRESLGIVKQQPFTVGADIWTLYELSWLNQNGVPQVAIADVIIDSSSSNIIESKSFKLYLNSFNQMRFPSREDVQRRIQSDLSKCAQGDVTVQIYKLSDFAMRSISEFNGECIDNQNICINRYDFTRESLQGIANGEIVEERLVSHLLKSNCLITSQPDWGSIQICYVGKQLDREKLLRYLVSFREHNEFHEQCVERIFCDLMEFAQPQKLTVYARYTRRGGLDINPFRSNFEGIPENLRMVRQ.

86–88 (IES) lines the substrate pocket. 88 to 89 (SK) provides a ligand contact to NADPH. C187 acts as the Thioimide intermediate in catalysis. D194 (proton donor) is an active-site residue. Residue 226–227 (HE) participates in substrate binding. 255–256 (RG) lines the NADPH pocket.

The protein belongs to the GTP cyclohydrolase I family. QueF type 2 subfamily. Homodimer.

Its subcellular location is the cytoplasm. The catalysed reaction is 7-aminomethyl-7-carbaguanine + 2 NADP(+) = 7-cyano-7-deazaguanine + 2 NADPH + 3 H(+). It participates in tRNA modification; tRNA-queuosine biosynthesis. Functionally, catalyzes the NADPH-dependent reduction of 7-cyano-7-deazaguanine (preQ0) to 7-aminomethyl-7-deazaguanine (preQ1). The chain is NADPH-dependent 7-cyano-7-deazaguanine reductase from Glaesserella parasuis serovar 5 (strain SH0165) (Haemophilus parasuis).